Consider the following 445-residue polypeptide: tRNA modification GTPase MnmE (445 aa).

3 residues coordinate (6S)-5-formyl-5,6,7,8-tetrahydrofolate: Arg-20, Glu-79, and Lys-119. Positions Gly-215–Glu-371 constitute a TrmE-type G domain. Asn-225 contributes to the K(+) binding site. GTP contacts are provided by residues Asn-225–Ser-230, Ser-244–Thr-250, and Asp-269–Gly-272. Position 229 (Ser-229) interacts with Mg(2+). Residues Ser-244, Ile-246, and Thr-249 each coordinate K(+). Residue Thr-250 participates in Mg(2+) binding. Lys-445 lines the (6S)-5-formyl-5,6,7,8-tetrahydrofolate pocket.

It belongs to the TRAFAC class TrmE-Era-EngA-EngB-Septin-like GTPase superfamily. TrmE GTPase family. As to quaternary structure, homodimer. Heterotetramer of two MnmE and two MnmG subunits. It depends on K(+) as a cofactor.

It localises to the cytoplasm. Functionally, exhibits a very high intrinsic GTPase hydrolysis rate. Involved in the addition of a carboxymethylaminomethyl (cmnm) group at the wobble position (U34) of certain tRNAs, forming tRNA-cmnm(5)s(2)U34. This chain is tRNA modification GTPase MnmE, found in Rickettsia prowazekii (strain Madrid E).